A 454-amino-acid chain; its full sequence is Allantoinase (454 aa).

Positions 59, 61, 150, 190, 246, and 319 each coordinate Zn(2+). At lysine 150 the chain carries N6-carboxylysine.

The protein belongs to the metallo-dependent hydrolases superfamily. Allantoinase family. In terms of assembly, homotetramer. It depends on Zn(2+) as a cofactor. In terms of processing, carboxylation allows a single lysine to coordinate two zinc ions.

The enzyme catalyses (S)-allantoin + H2O = allantoate + H(+). It functions in the pathway nitrogen metabolism; (S)-allantoin degradation; allantoate from (S)-allantoin: step 1/1. Its function is as follows. Catalyzes the conversion of allantoin (5-ureidohydantoin) to allantoic acid by hydrolytic cleavage of the five-member hydantoin ring. The polypeptide is Allantoinase (Bacillus licheniformis (strain ATCC 14580 / DSM 13 / JCM 2505 / CCUG 7422 / NBRC 12200 / NCIMB 9375 / NCTC 10341 / NRRL NRS-1264 / Gibson 46)).